We begin with the raw amino-acid sequence, 411 residues long: Glucose-1-phosphate adenylyltransferase (411 aa).

Residues glycine 161, 176 to 177, and serine 195 each bind alpha-D-glucose 1-phosphate; that span reads EK.

Belongs to the bacterial/plant glucose-1-phosphate adenylyltransferase family. As to quaternary structure, homotetramer.

It catalyses the reaction alpha-D-glucose 1-phosphate + ATP + H(+) = ADP-alpha-D-glucose + diphosphate. It participates in glycan biosynthesis; glycogen biosynthesis. Its function is as follows. Involved in the biosynthesis of ADP-glucose, a building block required for the elongation reactions to produce glycogen. Catalyzes the reaction between ATP and alpha-D-glucose 1-phosphate (G1P) to produce pyrophosphate and ADP-Glc. The sequence is that of Glucose-1-phosphate adenylyltransferase from Anaeromyxobacter sp. (strain Fw109-5).